Reading from the N-terminus, the 726-residue chain is Netrin-A (726 aa).

Residues 1-29 (MIRGILLLLLGTTRFSPIQCISNDVYFKM) form the signal peptide. The Laminin N-terminal domain occupies 46-312 (EPRACIPDFV…AISDFSVGGR (267 aa)). N-linked (GlcNAc...) asparagine glycans are attached at residues N108, N112, and N127. Disulfide bonds link C313–C322, C315–C332, C334–C343, C346–C366, C369–C378, C371–C396, C399–C408, C411–C429, C432–C444, C434–C451, C453–C462, and C465–C479. Laminin EGF-like domains are found at residues 313-368 (CKCN…ECKE), 369-431 (CNCN…VCKA), and 432-481 (CDCH…PCIK). The N-linked (GlcNAc...) asparagine glycan is linked to N445. The disordered stretch occupies residues 490–516 (LDTQNTAPEPDEPESSPGSGGDRNGAA). 2 cysteine pairs are disulfide-bonded: C533/C671 and C549/C725. One can recognise an NTR domain in the interval 533-725 (CGKCRVSTKR…KRFQRRARTC (193 aa)). 2 N-linked (GlcNAc...) asparagine glycosylation sites follow: N652 and N679.

In terms of tissue distribution, at the midline of developing CNS at the time of commissure formation and in different subsets of neurons, muscles, and epidermal patches.

The protein resides in the secreted. It is found in the extracellular space. It localises to the extracellular matrix. Functionally, netrins control guidance of CNS commissural axons at the midline and peripheral motor axons to their target muscles. The polypeptide is Netrin-A (NetA) (Drosophila melanogaster (Fruit fly)).